The sequence spans 194 residues: Peptide deformylase (194 aa).

Fe cation contacts are provided by cysteine 105 and histidine 147. Residue glutamate 148 is part of the active site. A Fe cation-binding site is contributed by histidine 151.

It belongs to the polypeptide deformylase family. It depends on Fe(2+) as a cofactor.

The catalysed reaction is N-terminal N-formyl-L-methionyl-[peptide] + H2O = N-terminal L-methionyl-[peptide] + formate. Functionally, removes the formyl group from the N-terminal Met of newly synthesized proteins. Requires at least a dipeptide for an efficient rate of reaction. N-terminal L-methionine is a prerequisite for activity but the enzyme has broad specificity at other positions. This chain is Peptide deformylase, found in Flavobacterium psychrophilum (strain ATCC 49511 / DSM 21280 / CIP 103535 / JIP02/86).